Here is a 286-residue protein sequence, read N- to C-terminus: Aquaporin NIP1-3 (286 aa).

The disordered stretch occupies residues 1 to 44 (MAGGEHGVNGQHEETRAMEEGSRDHQARCENSEQDGGSKSSSNN). Residues 11–31 (QHEETRAMEEGSRDHQARCEN) are compositionally biased toward basic and acidic residues. Over residues 34-44 (QDGGSKSSSNN) the composition is skewed to polar residues. A run of 2 helical transmembrane segments spans residues 56-76 (VIAE…AVAV) and 84-104 (VTFP…VYSV). The NPA 1 motif lies at 113-115 (NPA). Transmembrane regions (helical) follow at residues 131-153 (VPAY…RALF), 172-192 (SLAM…GVAT), and 200-220 (LAGL…GPIS). The NPA 2 signature appears at 225–227 (NPA). The chain crosses the membrane as a helical span at residues 239 to 259 (YTGIWVYIAGPVFGAVAGAWA).

It belongs to the MIP/aquaporin (TC 1.A.8) family. NIP (TC 1.A.8.12) subfamily.

The protein resides in the membrane. Its function is as follows. Aquaporins facilitate the transport of water and small neutral solutes across cell membranes. The chain is Aquaporin NIP1-3 (NIP1-3) from Oryza sativa subsp. japonica (Rice).